The chain runs to 290 residues: Protein-lysine methyltransferase METTL21E (290 aa).

S-adenosyl-L-methionine is bound by residues Trp96, 124–126 (GAG), Asp145, Trp176, and Ala197.

The protein belongs to the methyltransferase superfamily. METTL21 family.

Its function is as follows. Protein-lysine methyltransferase. The polypeptide is Protein-lysine methyltransferase METTL21E (METTL21E) (Bos taurus (Bovine)).